Here is a 377-residue protein sequence, read N- to C-terminus: Histone deacetylase 8 (377 aa).

Positions 14-324 (LPPVYIYSPE…WTYLTGVILG (311 aa)) are histone deacetylase. Position 39 is a phosphoserine (S39). D101 provides a ligand contact to substrate. The Proton acceptor role is filled by H143. Position 151 (G151) interacts with substrate. D178, H180, and D267 together coordinate a divalent metal cation. Residue Y306 coordinates substrate.

This sequence belongs to the histone deacetylase family. HD type 1 subfamily. Interacts with CBFA2T3. Interacts with phosphorylated SMG5/EST1B; this interaction protects SMG5 from ubiquitin-mediated degradation. Associates with alpha-SMA (smooth muscle alpha-actin). A divalent metal cation is required as a cofactor. In terms of processing, phosphorylated by PKA on serine 39. Phosphorylation reduces deacetylase activity observed preferentially on histones H3 and H4.

The protein resides in the nucleus. Its subcellular location is the chromosome. The protein localises to the cytoplasm. The enzyme catalyses N(6)-acetyl-L-lysyl-[histone] + H2O = L-lysyl-[histone] + acetate. It catalyses the reaction N(6)-acetyl-L-lysyl-[protein] + H2O = L-lysyl-[protein] + acetate. It carries out the reaction N(6)-(2E)-butenoyl-L-lysyl-[protein] + H2O = (2E)-2-butenoate + L-lysyl-[protein]. With respect to regulation, its activity is inhibited by trichostatin A (TSA) and butyrate, 2 well known histone deacetylase inhibitors. Functionally, histone deacetylase that catalyzes the deacetylation of lysine residues on the N-terminal part of the core histones (H2A, H2B, H3 and H4). Histone deacetylation gives a tag for epigenetic repression and plays an important role in transcriptional regulation, cell cycle progression and developmental events. Histone deacetylases act via the formation of large multiprotein complexes. Also involved in the deacetylation of cohesin complex protein SMC3 regulating release of cohesin complexes from chromatin. May play a role in smooth muscle cell contractility. In addition to protein deacetylase activity, also has protein-lysine deacylase activity: acts as a protein decrotonylase by mediating decrotonylation ((2E)-butenoyl) of histones. The chain is Histone deacetylase 8 (HDAC8) from Bos taurus (Bovine).